The primary structure comprises 150 residues: MIP18 family protein FAM96A (150 aa).

It belongs to the MIP18 family.

May play a role in chromosome segregation through establishment of sister chromatid cohesion. The protein is MIP18 family protein FAM96A (fam96A) of Dictyostelium discoideum (Social amoeba).